The chain runs to 62 residues: Teretoxin Tan1.1 (62 aa).

The N-terminal stretch at 1 to 21 is a signal peptide; the sequence is MSCFPVLFVMMLLVSQSVWAF. The propeptide occupies 22-38; sequence PGPETRDGSVQDAESRR.

This sequence belongs to the teretoxin A (TA) superfamily. Post-translationally, contains 2 disulfide bonds. In terms of tissue distribution, expressed by the venom duct.

Its subcellular location is the secreted. The chain is Teretoxin Tan1.1 from Terebra anilis (Auger snail).